Here is a 1024-residue protein sequence, read N- to C-terminus: Hemolysin, plasmid (1024 aa).

A compositionally biased stretch (polar residues) spans 20-32 (AANKLHSAGQSTK). Positions 20–39 (AANKLHSAGQSTKDALKKAA) are disordered. 3 consecutive transmembrane segments (helical) span residues 238–260 (IGAGLDTVSGILSAISASFILSN), 268–327 (KAAA…LSIA), and 365–411 (DASL…GILE). N6-myristoyl lysine attachment occurs at residues Lys-564 and Lys-690. Hemolysin-type calcium-binding repeat units lie at residues 732-749 (FGSKFTDIFHGADGDDLI), 750-767 (EGNDGNDRLYGDKGNDTL), 768-785 (SGGNGDDQLYGGDGNDKL), 786-803 (IGVAGNNYLNGGDGDDEF), 816-833 (FGGKGNDKLYGSEGADLL), and 834-851 (DGGEGDDLLKGGYGNDIY).

Belongs to the RTX prokaryotic toxin (TC 1.C.11) family. In terms of processing, myristoylated by HlyC; the toxin only becomes active when modified. Mainly myristoylated, while a minor fraction is acylated with pentadecanoyl (C15:0; 26%) and heptadecanoyl (C17:0; 6%) fatty acyl groups. Fatty acylation is involved in binding to host membranes and promotes the irreversible insertion of Hemolysin into the host cell membrane. Can be activated by both myristoylation and palmitoylation, but HlyC catalyzes lysine myristoylation.

It is found in the secreted. Its subcellular location is the host cell membrane. Functionally, bacterial hemolysins are exotoxins that attack blood cell membranes and cause cell rupture by forming a pore. The polypeptide is Hemolysin, plasmid (Escherichia coli).